Here is a 164-residue protein sequence, read N- to C-terminus: uncharacterized protein (164 aa).

Residues 1-22 (MKTNRSLVVIVSLITATLLLTA) form the signal peptide. Residue Cys-23 is the site of N-palmitoyl cysteine attachment. A lipid anchor (S-diacylglycerol cysteine) is attached at Cys-23.

Its subcellular location is the cell membrane. This is an uncharacterized protein from Escherichia coli (strain K12).